Consider the following 101-residue polypeptide: NADH-quinone oxidoreductase subunit K 1 (101 aa).

3 helical membrane passes run 4 to 24 (IGTMHYLVVAAMLFIIGTVGV), 31 to 51 (VVILMSIELILNAVNLNLVAF), and 64 to 84 (IFVMVDAAAEAAVGLGIVIAF).

This sequence belongs to the complex I subunit 4L family. In terms of assembly, NDH-1 is composed of 14 different subunits. Subunits NuoA, H, J, K, L, M, N constitute the membrane sector of the complex.

The protein localises to the cell inner membrane. The catalysed reaction is a quinone + NADH + 5 H(+)(in) = a quinol + NAD(+) + 4 H(+)(out). NDH-1 shuttles electrons from NADH, via FMN and iron-sulfur (Fe-S) centers, to quinones in the respiratory chain. The immediate electron acceptor for the enzyme in this species is believed to be ubiquinone. Couples the redox reaction to proton translocation (for every two electrons transferred, four hydrogen ions are translocated across the cytoplasmic membrane), and thus conserves the redox energy in a proton gradient. The chain is NADH-quinone oxidoreductase subunit K 1 from Koribacter versatilis (strain Ellin345).